A 98-amino-acid chain; its full sequence is NADH-ubiquinone oxidoreductase chain 4L (98 aa).

3 helical membrane-spanning segments follow: residues 1-21 (MTPT…GMLT), 27-47 (VASL…ATLI), and 61-81 (IILL…LISI).

Belongs to the complex I subunit 4L family. In terms of assembly, core subunit of respiratory chain NADH dehydrogenase (Complex I) which is composed of 45 different subunits.

Its subcellular location is the mitochondrion inner membrane. It carries out the reaction a ubiquinone + NADH + 5 H(+)(in) = a ubiquinol + NAD(+) + 4 H(+)(out). Functionally, core subunit of the mitochondrial membrane respiratory chain NADH dehydrogenase (Complex I) which catalyzes electron transfer from NADH through the respiratory chain, using ubiquinone as an electron acceptor. Part of the enzyme membrane arm which is embedded in the lipid bilayer and involved in proton translocation. In Macaca fascicularis (Crab-eating macaque), this protein is NADH-ubiquinone oxidoreductase chain 4L (MT-ND4L).